The sequence spans 152 residues: Deoxyuridine 5'-triphosphate nucleotidohydrolase (152 aa).

Substrate contacts are provided by residues 71–73, Asn-84, 88–90, and Met-98; these read RSG and LID.

The protein belongs to the dUTPase family. It depends on Mg(2+) as a cofactor.

The enzyme catalyses dUTP + H2O = dUMP + diphosphate + H(+). It functions in the pathway pyrimidine metabolism; dUMP biosynthesis; dUMP from dCTP (dUTP route): step 2/2. Its function is as follows. This enzyme is involved in nucleotide metabolism: it produces dUMP, the immediate precursor of thymidine nucleotides and it decreases the intracellular concentration of dUTP so that uracil cannot be incorporated into DNA. The chain is Deoxyuridine 5'-triphosphate nucleotidohydrolase from Shewanella amazonensis (strain ATCC BAA-1098 / SB2B).